A 641-amino-acid polypeptide reads, in one-letter code: Probable potassium transport system protein Kup (641 aa).

The next 12 helical transmembrane spans lie at 29-49 (ISLA…LYAI), 66-86 (ILGV…LKYL), 119-139 (WVLV…AMIT), 156-176 (PAFA…LFLF), 185-205 (GALF…LGII), 231-251 (LHGF…EALY), 266-286 (WVLF…AFLL), 298-318 (ALVP…ATVI), 356-376 (IYVP…VLGF), 384-404 (AAYG…FFFV), 415-435 (VLWA…GASM), and 438-458 (LFHG…LMNT).

This sequence belongs to the HAK/KUP transporter (TC 2.A.72) family.

Its subcellular location is the cell inner membrane. It catalyses the reaction K(+)(in) + H(+)(in) = K(+)(out) + H(+)(out). Transport of potassium into the cell. Likely operates as a K(+):H(+) symporter. This chain is Probable potassium transport system protein Kup, found in Chlorobium phaeovibrioides (strain DSM 265 / 1930) (Prosthecochloris vibrioformis (strain DSM 265)).